We begin with the raw amino-acid sequence, 238 residues long: Protein G1-like8 (238 aa).

2 disordered regions span residues 1–33 (MEGG…RYES) and 147–238 (KARG…ATRV). The span at 10–27 (GQAQPVAQAPPAMQPMQQ) shows a compositional bias: low complexity. Positions 30–157 (RYESQKRRDW…ARGIPYEKKK (128 aa)) constitute an ALOG domain. The Nuclear localization signal motif lies at 155–159 (KKKRK). Positions 165–176 (QPPPPPPPPPQH) are enriched in pro residues. Low complexity-rich tracts occupy residues 177–213 (QPGA…ATSQ) and 222–238 (TTTT…ATRV).

This sequence belongs to the plant homeotic and developmental regulators ALOG protein family.

The protein localises to the nucleus. In terms of biological role, probable transcription regulator that acts as a developmental regulator by promoting cell growth in response to light. This Oryza sativa subsp. japonica (Rice) protein is Protein G1-like8 (G1L8).